A 174-amino-acid chain; its full sequence is Crossover junction endodeoxyribonuclease RuvC (174 aa).

Residues Asp8, Glu68, and Asp140 contribute to the active site. Mg(2+)-binding residues include Asp8, Glu68, and Asp140.

The protein belongs to the RuvC family. In terms of assembly, homodimer which binds Holliday junction (HJ) DNA. The HJ becomes 2-fold symmetrical on binding to RuvC with unstacked arms; it has a different conformation from HJ DNA in complex with RuvA. In the full resolvosome a probable DNA-RuvA(4)-RuvB(12)-RuvC(2) complex forms which resolves the HJ. It depends on Mg(2+) as a cofactor.

The protein localises to the cytoplasm. The enzyme catalyses Endonucleolytic cleavage at a junction such as a reciprocal single-stranded crossover between two homologous DNA duplexes (Holliday junction).. Its function is as follows. The RuvA-RuvB-RuvC complex processes Holliday junction (HJ) DNA during genetic recombination and DNA repair. Endonuclease that resolves HJ intermediates. Cleaves cruciform DNA by making single-stranded nicks across the HJ at symmetrical positions within the homologous arms, yielding a 5'-phosphate and a 3'-hydroxyl group; requires a central core of homology in the junction. The consensus cleavage sequence is 5'-(A/T)TT(C/G)-3'. Cleavage occurs on the 3'-side of the TT dinucleotide at the point of strand exchange. HJ branch migration catalyzed by RuvA-RuvB allows RuvC to scan DNA until it finds its consensus sequence, where it cleaves and resolves the cruciform DNA. In Legionella pneumophila (strain Paris), this protein is Crossover junction endodeoxyribonuclease RuvC.